A 233-amino-acid chain; its full sequence is uncharacterized protein (233 aa).

2 disordered regions span residues 1-159 and 181-206; these read MGKH…NEKL and MGVK…QDKM. A compositionally biased stretch (basic and acidic residues) spans 36–115; sequence RDRSRSPHKE…RRDDKNRLSA (80 aa). Residues 135 to 148 are compositionally biased toward low complexity; it reads SSSSNTTDTASSSS. The span at 189–206 shows a compositional bias: basic and acidic residues; that stretch reads PTDDSSRLSDEKNRQDKM.

This is an uncharacterized protein from Caenorhabditis elegans.